Consider the following 465-residue polypeptide: MKIVVSRGLDLSLKGAPKESGFCGKVDPTYVSVDLRPFAPLPLEVKVTPGDQVTAGSPLAEYKLFSGVFITSPVDGEVVEIRRGNKRALLEIVIKKKPGISQTKFSYDLQSLTQKDLLEVFKKEGLFALFKQRPFDIPALPTQSPRDVFINLADNRPFTPSVEKHLSLFSSKEDGYYIFVVGVQAIAKLFGLKPHIISTDRLTLPTQDLVSIAHLHTIDGPFPSGSPSTHIHHIARIRNERDVVFTISFQEVLSIGHLFLKGFVLGQQIVALAGSALPPSQRKYLITAKGASFFDLLPKDIFSSDEITLISGDPLTGRLCKKEENPCLGMRDHTITLLPNPKTRESFSFLRLGWNKLTVTRTYLSGFFKRKRVFMDMDTNMHGEKRPIIDAEIYERVSAIPVPVALIIKALETQNFEEACRLGLLEVAPEDFALPTFIDPSKTEMFSIVKESLLRYAKENVVTSS.

It belongs to the NqrA family. Composed of six subunits; NqrA, NqrB, NqrC, NqrD, NqrE and NqrF.

It catalyses the reaction a ubiquinone + n Na(+)(in) + NADH + H(+) = a ubiquinol + n Na(+)(out) + NAD(+). Its function is as follows. NQR complex catalyzes the reduction of ubiquinone-1 to ubiquinol by two successive reactions, coupled with the transport of Na(+) ions from the cytoplasm to the periplasm. NqrA to NqrE are probably involved in the second step, the conversion of ubisemiquinone to ubiquinol. This is Na(+)-translocating NADH-quinone reductase subunit A from Chlamydia trachomatis serovar L2b (strain UCH-1/proctitis).